We begin with the raw amino-acid sequence, 172 residues long: MAVRPIIRFPSPLLTTSAERIGRFDGTLRQLSDDLVDTMRAAPGIGITASHIGILQRLTVIEVDPQTGPRSFVNPEIVWQSSETAWHTEGSVSMPGVAEEVERPVRVRVSFQTLDGETREEEAEGLMAVCLQHEIDQLNGIFWIRRLSRLKRERAVKRFEKFNRAEAFPGTQ.

E134 is an active-site residue.

Belongs to the polypeptide deformylase family.

This is Peptide deformylase-like from Rhizobium meliloti (strain 1021) (Ensifer meliloti).